The primary structure comprises 240 residues: 4-hydroxy-tetrahydrodipicolinate reductase (240 aa).

NAD(+) is bound by residues 79–81 and 103–106; these read ATT and SANM. Histidine 135 (proton donor/acceptor) is an active-site residue. Histidine 136 serves as a coordination point for (S)-2,3,4,5-tetrahydrodipicolinate. Lysine 139 serves as the catalytic Proton donor. 145 to 146 serves as a coordination point for (S)-2,3,4,5-tetrahydrodipicolinate; that stretch reads GT.

Belongs to the DapB family.

It is found in the cytoplasm. It carries out the reaction (S)-2,3,4,5-tetrahydrodipicolinate + NAD(+) + H2O = (2S,4S)-4-hydroxy-2,3,4,5-tetrahydrodipicolinate + NADH + H(+). The enzyme catalyses (S)-2,3,4,5-tetrahydrodipicolinate + NADP(+) + H2O = (2S,4S)-4-hydroxy-2,3,4,5-tetrahydrodipicolinate + NADPH + H(+). Its pathway is amino-acid biosynthesis; L-lysine biosynthesis via DAP pathway; (S)-tetrahydrodipicolinate from L-aspartate: step 4/4. Functionally, catalyzes the conversion of 4-hydroxy-tetrahydrodipicolinate (HTPA) to tetrahydrodipicolinate. The polypeptide is 4-hydroxy-tetrahydrodipicolinate reductase (Staphylococcus epidermidis (strain ATCC 12228 / FDA PCI 1200)).